We begin with the raw amino-acid sequence, 92 residues long: Acylphosphatase (92 aa).

Positions 5-92 constitute an Acylphosphatase-like domain; that stretch reads RWHLLVSGKV…QEFTDFRTTH (88 aa). Catalysis depends on residues arginine 20 and asparagine 38.

Belongs to the acylphosphatase family.

It catalyses the reaction an acyl phosphate + H2O = a carboxylate + phosphate + H(+). The protein is Acylphosphatase (acyP) of Marinobacter nauticus (strain ATCC 700491 / DSM 11845 / VT8) (Marinobacter aquaeolei).